Consider the following 643-residue polypeptide: 1-deoxy-D-xylulose-5-phosphate synthase (643 aa).

Thiamine diphosphate-binding positions include His78 and 119–121 (AHS). Position 150 (Asp150) interacts with Mg(2+). Thiamine diphosphate-binding positions include 151–152 (GS), Asn179, Tyr288, and Glu370. Position 179 (Asn179) interacts with Mg(2+).

It belongs to the transketolase family. DXPS subfamily. Homodimer. Requires Mg(2+) as cofactor. Thiamine diphosphate serves as cofactor.

The catalysed reaction is D-glyceraldehyde 3-phosphate + pyruvate + H(+) = 1-deoxy-D-xylulose 5-phosphate + CO2. The protein operates within metabolic intermediate biosynthesis; 1-deoxy-D-xylulose 5-phosphate biosynthesis; 1-deoxy-D-xylulose 5-phosphate from D-glyceraldehyde 3-phosphate and pyruvate: step 1/1. In terms of biological role, catalyzes the acyloin condensation reaction between C atoms 2 and 3 of pyruvate and glyceraldehyde 3-phosphate to yield 1-deoxy-D-xylulose-5-phosphate (DXP). This is 1-deoxy-D-xylulose-5-phosphate synthase from Brucella suis (strain ATCC 23445 / NCTC 10510).